Reading from the N-terminus, the 481-residue chain is Extracellular exo-alpha-(1-&gt;5)-L-arabinofuranosidase (481 aa).

The N-terminal stretch at 1–27 (MRRLTVRLFTAVLAALALLTMGTPAHA) is a signal peptide. Residues 37–336 (FTNPLAEKRA…KVYWNADGTP (300 aa)) form a catalytic region. Asp47 serves as the catalytic Proton acceptor. A substrate-binding site is contributed by Asn186. The active-site Proton donor is Glu223. Substrate-binding positions include His287, Arg321, 363 to 366 (HWDF), Asp379, 457 to 460 (HYEN), and Asp475. Residues 349-479 (VRFSSYNYPD…ALDRQDATFY (131 aa)) form an ABD region.

Belongs to the glycosyl hydrolase 43 family.

Its subcellular location is the secreted. The catalysed reaction is Hydrolysis of terminal non-reducing alpha-L-arabinofuranoside residues in alpha-L-arabinosides.. It participates in glycan metabolism; L-arabinan degradation. Involved in the degradation of arabinan and is a key enzyme in the complete degradation of the plant cell wall. Catalyzes only the cleavage of terminal alpha-(1-&gt;5) arabinofuranosyl bonds of arabinan present in the arabinofuranosyl polysaccharides or oligosaccharides. It cannot act on other arabinose-containing polysaccharides and arabinoxylo-oligosaccharides. This is Extracellular exo-alpha-(1-&gt;5)-L-arabinofuranosidase from Streptomyces avermitilis (strain ATCC 31267 / DSM 46492 / JCM 5070 / NBRC 14893 / NCIMB 12804 / NRRL 8165 / MA-4680).